A 180-amino-acid polypeptide reads, in one-letter code: Magnetosome protein MamS (180 aa).

The Cytoplasmic segment spans residues 1-21 (MDFRPDQVVARIRGAVEGALT). Residues 22-42 (AQSVLGIGGALVLILVVIALL) traverse the membrane as a helical segment. At 43–180 (PDRFTRGEGK…EGLALWMTVQ (138 aa)) the chain is on the lumenal side.

The protein belongs to the magnetosome MamS family.

It localises to the magnetosome membrane. Functionally, may play a role in magnetite crystal growth and size. The chain is Magnetosome protein MamS from Magnetospirillum gryphiswaldense (strain DSM 6361 / JCM 21280 / NBRC 15271 / MSR-1).